Here is a 192-residue protein sequence, read N- to C-terminus: Cytidylate kinase (192 aa).

An ATP-binding site is contributed by 7 to 15; the sequence is GPAGSGKST.

It belongs to the cytidylate kinase family. Type 2 subfamily.

The protein localises to the cytoplasm. The catalysed reaction is CMP + ATP = CDP + ADP. It carries out the reaction dCMP + ATP = dCDP + ADP. The polypeptide is Cytidylate kinase (Haloarcula marismortui (strain ATCC 43049 / DSM 3752 / JCM 8966 / VKM B-1809) (Halobacterium marismortui)).